Reading from the N-terminus, the 166-residue chain is S-phase kinase-associated protein 1 homolog (166 aa).

The interval 105–166 is interaction with the F-box domain of F-box proteins; sequence ILAANYLDIK…ENKWAEEATS (62 aa).

Belongs to the SKP1 family. Component of multiple SCF (SKP1-CUL1-F-box) E3 ubiquitin-protein ligase complexes formed of CUL1, SKP1, RBX1 and a variable F-box domain-containing protein as substrate-specific subunit.

It participates in protein modification; protein ubiquitination. Functionally, essential component of the SCF (SKP1-CUL1-F-box protein) ubiquitin ligase complex, which mediates the ubiquitination of proteins involved in cell cycle progression, signal transduction and transcription. In the SCF complex, serves as an adapter that links the F-box protein to CUL1. The functional specificity of the SCF complex depends on the F-box protein as substrate recognition component. Its association with the holoenzyme telomerase ribonucleoprotein complex suggests that it may play a role in turnover of holoenzyme telomerase complex components. This is S-phase kinase-associated protein 1 homolog from Tetrahymena thermophila (strain SB210).